A 620-amino-acid chain; its full sequence is Long-chain fatty acid transport protein 2 (620 aa).

The Lumenal segment spans residues 1–4 (MLSA). A helical transmembrane segment spans residues 5–27 (IYTVLAGLLFLPLLVNLCCPYFF). The Cytoplasmic segment spans residues 28–106 (QDIGYFLKVA…DHLGLRQGDC (79 aa)). The helical transmembrane segment at 107–127 (VALLMGNEPAYVWLWLGLVKL) threads the bilayer. Residues 128–261 (GCAMACLNYN…SGLKADDVIY (134 aa)) lie on the Lumenal side of the membrane. 222 to 233 (YIYTSGTTGLPK) provides a ligand contact to AMP. The helical transmembrane segment at 262-282 (ITLPFYHSAALLIGIHGCIVA) threads the bilayer. Residues 283–620 (GATLALRTKF…NAISAKTLKL (338 aa)) lie on the Cytoplasmic side of the membrane. Residue Lys-291 is modified to N6-acetyllysine. Thr-577 carries the phosphothreonine modification.

Belongs to the ATP-dependent AMP-binding enzyme family. In terms of tissue distribution, expressed in liver, kidney, placenta, intestine, brain, heart, and colon. Predominantly expressed in liver. Expressed in liver, placenta, and intestine, but much lower relative to isoform 1.

Its subcellular location is the endoplasmic reticulum membrane. It localises to the peroxisome membrane. It is found in the cell membrane. The protein resides in the microsome. It catalyses the reaction a fatty acid(in) = a fatty acid(out). It carries out the reaction (9Z)-octadecenoate(out) = (9Z)-octadecenoate(in). The enzyme catalyses a long-chain fatty acid + ATP + CoA = a long-chain fatty acyl-CoA + AMP + diphosphate. The catalysed reaction is (5Z,8Z,11Z,14Z)-eicosatetraenoate + ATP + CoA = (5Z,8Z,11Z,14Z)-eicosatetraenoyl-CoA + AMP + diphosphate. It catalyses the reaction hexadecanoate + ATP + CoA = hexadecanoyl-CoA + AMP + diphosphate. It carries out the reaction (9Z)-octadecenoate + ATP + CoA = (9Z)-octadecenoyl-CoA + AMP + diphosphate. The enzyme catalyses 3,7,11,15-tetramethylhexadecanoate + ATP + CoA = phytanoyl-CoA + AMP + diphosphate. The catalysed reaction is (9Z,12Z,15Z)-octadecatrienoate + ATP + CoA = (9Z,12Z,15Z)-octadecatrienoyl-CoA + AMP + diphosphate. It catalyses the reaction 2,6,10,14-tetramethylpentadecanoate + ATP + CoA = pristanoyl-CoA + AMP + diphosphate. It carries out the reaction (E)-hexadec-2-enoate + ATP + CoA = (2E)-hexadecenoyl-CoA + AMP + diphosphate. The enzyme catalyses a very long-chain fatty acid + ATP + CoA = a very long-chain fatty acyl-CoA + AMP + diphosphate. The catalysed reaction is tetracosanoate + ATP + CoA = tetracosanoyl-CoA + AMP + diphosphate. It catalyses the reaction (4Z,7Z,10Z,13Z,16Z,19Z)-docosahexaenoate + ATP + CoA = (4Z,7Z,10Z,13Z,16Z,19Z)-docosahexaenoyl-CoA + AMP + diphosphate. It carries out the reaction (25R)-3alpha,7alpha,12alpha-trihydroxy-5beta-cholestan-26-oate + ATP + CoA = (25R)-3alpha,7alpha,12alpha-trihydroxy-5beta-cholestan-26-oyl-CoA + AMP + diphosphate. Its function is as follows. Mediates the import of long-chain fatty acids (LCFA) into the cell by facilitating their transport across cell membranes, playing an important role in hepatic fatty acid uptake. Also functions as an acyl-CoA ligase catalyzing the ATP-dependent formation of fatty acyl-CoA using LCFA and very-long-chain fatty acids (VLCFA) as substrates, which prevents fatty acid efflux from cells and might drive more fatty acid uptake. Plays a pivotal role in regulating available LCFA substrates from exogenous sources in tissues undergoing high levels of beta-oxidation or triglyceride synthesis. Can also activate branched-chain fatty acids such as phytanic acid and pristanic acid. May contribute to the synthesis of sphingosine-1-phosphate. Does not activate C24 bile acids, cholate and chenodeoxycholate. In vitro, activates 3-alpha,7-alpha,12-alpha-trihydroxy-5-beta-cholestanate (THCA), the C27 precursor of cholic acid deriving from the de novo synthesis from cholesterol. However, it is not critical for THCA activation and bile synthesis in vivo. In terms of biological role, exhibits both long-chain fatty acids (LCFA) transport activity and acyl CoA synthetase towards very long-chain fatty acids. Shows a preference for generating CoA derivatives of n-3 fatty acids, which are preferentially trafficked into phosphatidylinositol. Exhibits long-chain fatty acids (LCFA) transport activity but lacks acyl CoA synthetase towards very long-chain fatty acids. The polypeptide is Long-chain fatty acid transport protein 2 (SLC27A2) (Homo sapiens (Human)).